We begin with the raw amino-acid sequence, 511 residues long: Phosphoenolpyruvate carboxylase (511 aa).

Belongs to the PEPCase type 2 family. In terms of assembly, homotetramer. It depends on Mg(2+) as a cofactor.

It catalyses the reaction oxaloacetate + phosphate = phosphoenolpyruvate + hydrogencarbonate. In terms of biological role, catalyzes the irreversible beta-carboxylation of phosphoenolpyruvate (PEP) to form oxaloacetate (OAA), a four-carbon dicarboxylic acid source for the tricarboxylic acid cycle. The polypeptide is Phosphoenolpyruvate carboxylase (Saccharolobus islandicus (strain L.S.2.15 / Lassen #1) (Sulfolobus islandicus)).